Reading from the N-terminus, the 198-residue chain is Probable GTP-binding protein EngB (198 aa).

The 174-residue stretch at 22–195 (GHPEIAFLGR…WSWLEQTAGL (174 aa)) folds into the EngB-type G domain. GTP contacts are provided by residues 30–37 (GRSNVGKS), 57–61 (GKTQT), 75–78 (DVPG), 142–145 (TKID), and 174–176 (FSA). Serine 37 and threonine 59 together coordinate Mg(2+).

This sequence belongs to the TRAFAC class TrmE-Era-EngA-EngB-Septin-like GTPase superfamily. EngB GTPase family. Requires Mg(2+) as cofactor.

Its function is as follows. Necessary for normal cell division and for the maintenance of normal septation. The protein is Probable GTP-binding protein EngB of Lacticaseibacillus paracasei (strain ATCC 334 / BCRC 17002 / CCUG 31169 / CIP 107868 / KCTC 3260 / NRRL B-441) (Lactobacillus paracasei).